The chain runs to 302 residues: Probable 2-(5''-triphosphoribosyl)-3'-dephosphocoenzyme-A synthase (302 aa).

Belongs to the CitG/MdcB family.

It carries out the reaction 3'-dephospho-CoA + ATP = 2'-(5''-triphospho-alpha-D-ribosyl)-3'-dephospho-CoA + adenine. This is Probable 2-(5''-triphosphoribosyl)-3'-dephosphocoenzyme-A synthase from Salmonella gallinarum (strain 287/91 / NCTC 13346).